A 285-amino-acid chain; its full sequence is Probable endonuclease 4 (285 aa).

Positions 69, 109, 145, 179, 182, 216, 229, 231, and 261 each coordinate Zn(2+).

The protein belongs to the AP endonuclease 2 family. The cofactor is Zn(2+).

It catalyses the reaction Endonucleolytic cleavage to 5'-phosphooligonucleotide end-products.. Functionally, endonuclease IV plays a role in DNA repair. It cleaves phosphodiester bonds at apurinic or apyrimidinic (AP) sites, generating a 3'-hydroxyl group and a 5'-terminal sugar phosphate. In Yersinia pseudotuberculosis serotype O:1b (strain IP 31758), this protein is Probable endonuclease 4.